The chain runs to 321 residues: Probable 1-aminocyclopropane-1-carboxylate oxidase (321 aa).

One can recognise a Fe2OG dioxygenase domain in the interval Pro-159–Pro-259. 3 residues coordinate Fe cation: His-183, Asp-185, and His-240.

Belongs to the iron/ascorbate-dependent oxidoreductase family. The cofactor is Fe cation.

It carries out the reaction 1-aminocyclopropane-1-carboxylate + L-ascorbate + O2 = ethene + L-dehydroascorbate + hydrogen cyanide + CO2 + 2 H2O. It functions in the pathway alkene biosynthesis; ethylene biosynthesis via S-adenosyl-L-methionine; ethylene from S-adenosyl-L-methionine: step 2/2. The sequence is that of Probable 1-aminocyclopropane-1-carboxylate oxidase (ACO) from Dianthus caryophyllus (Carnation).